Reading from the N-terminus, the 539-residue chain is Chaperonin GroEL (539 aa).

Residues 30–33 (TLGP), K51, 87–91 (DGTTT), G415, 479–481 (NAA), and D495 each bind ATP.

The protein belongs to the chaperonin (HSP60) family. In terms of assembly, forms a cylinder of 14 subunits composed of two heptameric rings stacked back-to-back. Interacts with the co-chaperonin GroES.

It is found in the cytoplasm. It carries out the reaction ATP + H2O + a folded polypeptide = ADP + phosphate + an unfolded polypeptide.. In terms of biological role, together with its co-chaperonin GroES, plays an essential role in assisting protein folding. The GroEL-GroES system forms a nano-cage that allows encapsulation of the non-native substrate proteins and provides a physical environment optimized to promote and accelerate protein folding. This chain is Chaperonin GroEL, found in Enterobacter agglomerans (Erwinia herbicola).